A 72-amino-acid polypeptide reads, in one-letter code: MLINAVIEKDENGYFAFVPFLKGCVSQGKSYEEALRNIKEAIELYLGDLEADELAFLSKKNSVIAPIEIAFA.

This sequence belongs to the UPF0150 family.

The protein is UPF0150 protein jhp_0960 of Helicobacter pylori (strain J99 / ATCC 700824) (Campylobacter pylori J99).